A 316-amino-acid polypeptide reads, in one-letter code: Ornithine carbamoyltransferase (316 aa).

Carbamoyl phosphate contacts are provided by residues 59–62 (STRT), Gln-86, Arg-110, and 137–140 (HPCQ). L-ornithine contacts are provided by residues Asn-168, Asp-232, and 236-237 (SM). Carbamoyl phosphate is bound by residues 273–274 (CL) and Arg-301.

The protein belongs to the aspartate/ornithine carbamoyltransferase superfamily. OTCase family.

It localises to the cytoplasm. The catalysed reaction is carbamoyl phosphate + L-ornithine = L-citrulline + phosphate + H(+). It functions in the pathway amino-acid degradation; L-arginine degradation via ADI pathway; carbamoyl phosphate from L-arginine: step 2/2. Functionally, reversibly catalyzes the transfer of the carbamoyl group from carbamoyl phosphate (CP) to the N(epsilon) atom of ornithine (ORN) to produce L-citrulline. This chain is Ornithine carbamoyltransferase, found in Listeria monocytogenes serotype 4a (strain HCC23).